The following is a 121-amino-acid chain: MSFYESVFIIRQDVSLNDIDKIVDDFAKIIKDNNGTIVKKEYWGLRTLAYKIGNNKKGHYYFLGLDITGNVKEELERKMKLNENIIRFLTIKADSISSEPSQILKNQSTENTPVIDVTINN.

The protein belongs to the bacterial ribosomal protein bS6 family.

Binds together with bS18 to 16S ribosomal RNA. The chain is Small ribosomal subunit protein bS6 from Rickettsia felis (strain ATCC VR-1525 / URRWXCal2) (Rickettsia azadi).